A 2462-amino-acid polypeptide reads, in one-letter code: Serine/threonine-protein kinase Wnk (2462 aa).

3 disordered regions span residues 18-133, 146-248, and 365-461; these read NRAR…ASKS, NTLP…KSSS, and EDDV…DDDP. Polar residues-rich tracts occupy residues 29–58 and 65–78; these read DGTTSCTTQPQRNTSISSEEQTVQGANIQK and NRSASSRQKPNPTS. Residues 94–124 are compositionally biased toward low complexity; it reads TLSAHTSTSSTTSIQSSPIEPASSLPTLNTT. The span at 146 to 155 shows a compositional bias: polar residues; the sequence is NTLPGKTASS. Basic and acidic residues-rich tracts occupy residues 190 to 205, 237 to 247, and 396 to 413; these read QSREQNEDEMDSKIEP, DTKKMEARKSS, and QSEKQAKSFDDITKKAES. The segment covering 414-452 has biased composition (low complexity); sequence SEASAEEAAVTGSSTDASASPLPSTSLVSTTSSATSITK. A Protein kinase domain is found at 471–729; that stretch reads FKYDKEVGRG…CNELLESEFF (259 aa). ATP is bound by residues Ser-481, 551 to 554, and Lys-601; that span reads TELM. The Proton acceptor role is filled by Asp-618. 2 positions are modified to phosphoserine; by autocatalysis: Ser-628 and Ser-632. 3 disordered regions span residues 844-873, 893-923, and 1006-1055; these read LQKQRESLPTNVDEDEEEEEESEDEEDGVK, LALSTNSVEPQQLSTRSNTSIPNSGIQQPVQ, and PQQQ…LQQQ. Positions 855 to 870 are enriched in acidic residues; it reads VDEDEEEEEESEDEED. A compositionally biased stretch (polar residues) spans 893–918; it reads LALSTNSVEPQQLSTRSNTSIPNSGI. Composition is skewed to low complexity over residues 1006–1034 and 1041–1055; these read PQQQVNQQQQQPQMMQQIPQQVQVQQPQT and HEQQPQQQQQPLQQQ. A coiled-coil region spans residues 1142–1178; that stretch reads AQHQLQQLQQQQLQQQQLQQQQQIQQQQLQQQQLQQQ. Positions 1236-1251 are enriched in polar residues; sequence QGGQVTLSDAQQQQHP. 9 disordered regions span residues 1236–1256, 1322–1382, 1418–1465, 1554–1578, 1615–1699, 1762–1790, 1828–1895, 1929–1966, and 2122–2229; these read QGGQVTLSDAQQQQHPGFSAV, QQQQ…EQIS, GALE…PKLS, LTRQRSTFRSHQRHRSRDETASDIT, NIPN…KDKK, DTSENAQQATEAEAEKPKDKSGQAVGNQG, QASP…SVGS, HEKQLSKQPSLEKPSATSILTNNSDPPQRNPSNGSINQ, and THVQ…FIQS. Basic residues predominate over residues 1559–1568; it reads STFRSHQRHR. The span at 1627 to 1641 shows a compositional bias: low complexity; that stretch reads STPPTTTSTMSSSST. A compositionally biased stretch (polar residues) spans 1642–1674; the sequence is ASRDAPNSSNDVTIGSGSVSRKTSTASEYTSLS. Polar residues-rich tracts occupy residues 1828-1852, 1861-1894, and 1943-1966; these read QASPAMSSLKATSGQPQTQEITKPN, SVGQNTPTAALTSARGSGSSVYNSRRTSIDNSVG, and SATSILTNNSDPPQRNPSNGSINQ. A compositionally biased stretch (low complexity) spans 2125–2136; the sequence is QQPSNLQPQQQS. A compositionally biased stretch (polar residues) spans 2137–2160; sequence VHPNMTQQPQQTPLNGHPSMVNTL. Residues 2161–2211 show a composition bias toward low complexity; that stretch reads QQQPPQQSLPMQTIQSQQQQHNQMPIISQQQQQQILMQQQQQQGSQQGSQQ. Over residues 2212 to 2229 the composition is skewed to polar residues; that stretch reads FNLPGTQQTHPQHQFIQS.

This sequence belongs to the protein kinase superfamily. Ser/Thr protein kinase family. WNK subfamily. It depends on Mg(2+) as a cofactor. Post-translationally, autophosphorylated. Autophosphorylation at Ser-628 and Ser-632 promotes its activity.

Its subcellular location is the cytoplasm. The enzyme catalyses L-seryl-[protein] + ATP = O-phospho-L-seryl-[protein] + ADP + H(+). The catalysed reaction is L-threonyl-[protein] + ATP = O-phospho-L-threonyl-[protein] + ADP + H(+). Activated in response to hyperosmotic stress: cell shrinkage promotes formation of a membraneless compartment that concentrates wnk-1 with its downstrem substrates. Activation requires autophosphorylation. Autophosphorylation and subsequent activation is inhibited by increases in intracellular Cl(-) or K(+). In terms of biological role, serine/threonine-protein kinase component of the WNK-SPAK/OSR1 kinase cascade, which plays an important role in the regulation of electrolyte homeostasis and regulatory volume increase in response to hyperosmotic stress. Wnk mediates regulatory volume increase in response to hyperosmotic stress by acting as a molecular crowding sensor, which senses cell shrinkage and mediates formation of a membraneless compartment by undergoing liquid-liquid phase separation. The membraneless compartment concentrates Wnk with its substrate Fray, promoting Wnk-dependent phosphorylation and activation of downstream kinase Fray. Following activation, Fray catalyzes phosphorylation of ion cotransporters Ncc69 and Irk1, regulating their activity. Phosphorylation of Na-K-Cl cotransporter Ncc69 promotes its activation and ion influx. Involved in circadian rhythms in small ventral lateral (sLNv) pacemaker neurons: in the morning, Wnk activity is repressed by high levels of intracellular chloride; in contrast Wnk activation in the evening promotes the activation of the inwardly rectifying potassium channel Irk1 via Fray. Acts as a positive regulator of the canonical Wnt signaling pathway during wing disk development. The polypeptide is Serine/threonine-protein kinase Wnk (Drosophila melanogaster (Fruit fly)).